We begin with the raw amino-acid sequence, 530 residues long: Arginine--tRNA ligase (530 aa).

The short motif at 113–123 (ANPTGPLHIGH) is the 'HIGH' region element.

Belongs to the class-I aminoacyl-tRNA synthetase family. As to quaternary structure, monomer.

It localises to the cytoplasm. The catalysed reaction is tRNA(Arg) + L-arginine + ATP = L-arginyl-tRNA(Arg) + AMP + diphosphate. The protein is Arginine--tRNA ligase of Campylobacter jejuni subsp. doylei (strain ATCC BAA-1458 / RM4099 / 269.97).